An 893-amino-acid polypeptide reads, in one-letter code: Protein kintoun (893 aa).

5 disordered regions span residues 211–243, 372–395, 587–719, 781–821, and 834–893; these read KNATAEEREPHPLEHTYPKKPEANAGKPKVLPM, LSREDSGVELNSNSESPAEDEEAG, EQVH…SIDD, QRKK…QQTA, and PQNN…DEDM. Positions 214-232 are enriched in basic and acidic residues; it reads TAEEREPHPLEHTYPKKPE. Position 377 is a phosphoserine (Ser-377). Positions 594–603 are enriched in acidic residues; sequence QQEEEEEEEQ. Over residues 609–626 the composition is skewed to basic residues; the sequence is HQHKKGNKKQRKRNKKQR. The segment covering 640–651 has biased composition (low complexity); that stretch reads QQQQHQKQQQQQ. Polar residues-rich tracts occupy residues 656–667 and 684–694; these read ENSSPESLNAGS and FSECNDSSSVQ. A compositionally biased stretch (low complexity) spans 709–719; that stretch reads SISESSSSIDD. Positions 781–797 are enriched in basic residues; the sequence is QRKKNQKRRDCKLRAQQ. Position 801 is a phosphoserine (Ser-801). Low complexity predominate over residues 836–848; the sequence is NNNNRSYSKNNKN. The segment covering 865 to 877 has biased composition (basic and acidic residues); it reads NNEEDTKRNEADA. Acidic residues predominate over residues 884–893; the sequence is EMDDDDDEDM.

Belongs to the PIH1 family. Kintoun subfamily. In terms of assembly, interacts with Pp1alpha-96A, Pp1-87B, Pp1-13C and flw.

The protein localises to the cytoplasm. Its function is as follows. Required for cytoplasmic pre-assembly of axonemal dyneins, thereby playing a central role in motility in cilia and flagella. Involved in pre-assembly of dynein arm complexes in the cytoplasm before intraflagellar transport loads them for the ciliary compartment. The protein is Protein kintoun of Drosophila grimshawi (Hawaiian fruit fly).